The sequence spans 907 residues: Envelope glycoprotein B (907 aa).

The signal sequence occupies residues 1-24; it reads MESRIWCLVVCVNLCIVCLGAAVS. Over 25–751 the chain is Virion surface; it reads SSSTRGTSAT…EGVATFLKNP (727 aa). Residues 29–62 are disordered; it reads RGTSATHSHHSSHTTSAAHSRSGSVSQRVTSSQT. Low complexity predominate over residues 41-62; it reads HTTSAAHSRSGSVSQRVTSSQT. N-linked (GlcNAc...) asparagine; by host glycans are attached at residues Asn68, Asn73, and Asn85. Disulfide bonds link Cys94–Cys551, Cys111–Cys507, Cys185–Cys250, and Cys344–Cys391. The segment at 152 to 158 is involved in fusion and/or binding to host membrane; the sequence is SYAYIHT. N-linked (GlcNAc...) asparagine; by host glycosylation is present at Asn208. Residues 237–244 are involved in fusion and/or binding to host membrane; sequence GSTWLYRE. Residues Asn281, Asn286, Asn302, Asn341, Asn383, Asn405, Asn409, Asn417, Asn447, Asn452, Asn456, Asn466, Asn555, and Asn586 are each glycosylated (N-linked (GlcNAc...) asparagine; by host). Cys574 and Cys611 are joined by a disulfide. Positions 697–749 are hydrophobic membrane proximal region; that stretch reads VEDKVVDPLPPYLKGLDDLMSGLGAAGKAVGVAIGAVGGAVASVVEGVATFLK. A helical transmembrane segment spans residues 752 to 772; sequence FGAFTIILVAIAVVIITYLIY. The Intravirion segment spans residues 773-907; that stretch reads TRQRRLCTQP…LKDSDEEENV (135 aa). Polar residues-rich tracts occupy residues 798–810 and 860–877; these read VTSG…SLQA and RAQQ…GTQD. Disordered regions lie at residues 798–838 and 857–907; these read VTSG…TAAP and AEQR…EENV. Basic and acidic residues predominate over residues 878-887; it reads KGQKPNLLDR. The Internalization motif motif lies at 895–898; it reads YRHL.

It belongs to the herpesviridae glycoprotein B family. Homotrimer; disulfide-linked. Binds to heparan sulfate proteoglycans. Interacts with gH/gL heterodimer. Post-translationally, a proteolytic cleavage by host furin generates two subunits that remain linked by disulfide bonds.

The protein resides in the virion membrane. Its subcellular location is the host cell membrane. It localises to the host endosome membrane. The protein localises to the host Golgi apparatus membrane. Functionally, envelope glycoprotein that forms spikes at the surface of virion envelope. Essential for the initial attachment to heparan sulfate moieties of the host cell surface proteoglycans. Involved in fusion of viral and cellular membranes leading to virus entry into the host cell. Following initial binding to its host receptors, membrane fusion is mediated by the fusion machinery composed at least of gB and the heterodimer gH/gL. May be involved in the fusion between the virion envelope and the outer nuclear membrane during virion egress. This chain is Envelope glycoprotein B, found in Human cytomegalovirus (strain Merlin) (HHV-5).